The following is a 522-amino-acid chain: Cytochrome P450 714C2 (522 aa).

Over 1–11 the chain is Lumenal; that stretch reads MELFSSQQWLA. Residues 12 to 32 traverse the membrane as a helical; Signal-anchor for type III membrane protein segment; that stretch reads LLPPIILCILLFSYVYIILWL. The Cytoplasmic segment spans residues 33–522; sequence RPERLRQKLR…KGVPLIFREL (490 aa). C470 contributes to the heme binding site.

The protein belongs to the cytochrome P450 family. The cofactor is heme.

Its subcellular location is the membrane. In terms of biological role, probably not involved in gibberellin metabolism since over-expression of CYP714C2 in a heterologous system does not induce semi-dwarfism. This is Cytochrome P450 714C2 (CYP714C2) from Oryza sativa subsp. japonica (Rice).